The sequence spans 175 residues: Bacterial proteasome activator (175 aa).

Residues 152–175 (LPPGIQVPGAQRGGATHPGTGQYL) form a disordered region. A HbYX motif motif is present at residues 173-175 (QYL).

The protein belongs to the Bpa family. In terms of assembly, forms a homooligomeric, either hexameric or heptameric, ring-like structure which stacks co-axially with the proteasomal alpha-rings.

Functionally, interacts with the core proteasome alpha-subunit (PrcA) through its C-terminal hydrophobic-tyrosine-X motif (HbYX motif). Interaction of Bpa with the proteasome stimulates proteasomal peptidase and casein degradation activity, which suggests Bpa could play a role in the removal of non-native or damaged proteins by influencing the conformation of the proteasome complex upon interaction. The polypeptide is Bacterial proteasome activator (Mycolicibacterium smegmatis (strain ATCC 700084 / mc(2)155) (Mycobacterium smegmatis)).